The primary structure comprises 368 residues: Ubiquitin domain-containing protein UBFD1 (368 aa).

The interval 106–139 (SCDARGNLQPAPAQPPGDPAAQASVSNGEDAGGG) is disordered. One can recognise a Ubiquitin-like domain in the interval 143 to 218 (ELVDLKIIWN…IMVVGSTIND (76 aa)). The tract at residues 231-263 (QDAKAEENKKEPLCRQKQHRKVLDKGKPEDVMP) is disordered. Basic and acidic residues-rich tracts occupy residues 233-244 (AKAEENKKEPLC) and 251-260 (KVLDKGKPED).

The protein is Ubiquitin domain-containing protein UBFD1 (Ubfd1) of Mus musculus (Mouse).